The primary structure comprises 66 residues: Large ribosomal subunit protein eL24 (66 aa).

Zn(2+)-binding residues include Cys7, Cys10, Cys33, and Cys37. Residues 7–37 (CSYCGKPFEPGTGKMYVRNDGRVLFFCSRKC) form a C4-type zinc finger.

It belongs to the eukaryotic ribosomal protein eL24 family. As to quaternary structure, part of the 50S ribosomal subunit. Forms a cluster with proteins L3 and L14. It depends on Zn(2+) as a cofactor.

Functionally, binds to the 23S rRNA. The sequence is that of Large ribosomal subunit protein eL24 from Pyrococcus furiosus (strain ATCC 43587 / DSM 3638 / JCM 8422 / Vc1).